Consider the following 935-residue polypeptide: C-1-tetrahydrofolate synthase, cytoplasmic (935 aa).

Met-1 is subject to N-acetylmethionine. The methylenetetrahydrofolate dehydrogenase and methenyltetrahydrofolate cyclohydrolase (D/C) domain stretch occupies residues 2–291 (APAEILNGRE…MLMQSTVESA (290 aa)). Residues 52 to 56 (YINVK) and 99 to 101 (VQL) contribute to the substrate site. Lys-56 is a catalytic residue. Residues 172–174 (GRS) and Ser-197 each bind NADP(+). 272–276 (PGGVG) is a binding site for substrate. The segment at 310–935 (LNLKTPDPSD…PETQQVNGLF (626 aa)) is formyltetrahydrofolate synthetase domain. Position 318 is a phosphoserine (Ser-318). 380–387 (TPLGEGKS) provides a ligand contact to ATP. Residues Ser-413 and Ser-490 each carry the phosphoserine modification.

It in the N-terminal section; belongs to the tetrahydrofolate dehydrogenase/cyclohydrolase family. In the C-terminal section; belongs to the formate--tetrahydrofolate ligase family. Homodimer.

Its subcellular location is the cytoplasm. It catalyses the reaction (6R)-5,10-methylene-5,6,7,8-tetrahydrofolate + NADP(+) = (6R)-5,10-methenyltetrahydrofolate + NADPH. The enzyme catalyses (6R)-5,10-methenyltetrahydrofolate + H2O = (6R)-10-formyltetrahydrofolate + H(+). It carries out the reaction (6S)-5,6,7,8-tetrahydrofolate + formate + ATP = (6R)-10-formyltetrahydrofolate + ADP + phosphate. The protein operates within one-carbon metabolism; tetrahydrofolate interconversion. Functionally, trifunctional enzyme that catalyzes the interconversion of three forms of one-carbon-substituted tetrahydrofolate: (6R)-5,10-methylene-5,6,7,8-tetrahydrofolate, 5,10-methenyltetrahydrofolate and (6S)-10-formyltetrahydrofolate. These derivatives of tetrahydrofolate are differentially required in nucleotide and amino acid biosynthesis, (6S)-10-formyltetrahydrofolate being required for purine biosynthesis while (6R)-5,10-methylene-5,6,7,8-tetrahydrofolate is used for serine and methionine biosynthesis for instance. The sequence is that of C-1-tetrahydrofolate synthase, cytoplasmic (MTHFD1) from Pongo abelii (Sumatran orangutan).